The chain runs to 126 residues: Profilin-1 (126 aa).

The protein belongs to the profilin family. In terms of assembly, occurs in many kinds of cells as a complex with monomeric actin in a 1:1 ratio.

The protein resides in the cytoplasm. It localises to the cytoskeleton. Its function is as follows. Binds to actin and affects the structure of the cytoskeleton. At high concentrations, profilin prevents the polymerization of actin, whereas it enhances it at low concentrations. By binding to PIP2, it inhibits the formation of IP3 and DG. The protein is Profilin-1 (proA) of Dictyostelium discoideum (Social amoeba).